Reading from the N-terminus, the 836-residue chain is MGPRAKAVCSLFILLQVLAEPAENSDFYLPGDYLLGGLFTLHANVKGTVHLSFLQVPQCKKYEMKVLGYNLMQAMRFAVEEINNRSDLLPGVLLGYEIVDVCYISNNVQPVLYFLAREDYSLPIQEDYSHYVPRVLAVIGPDNSESTTTVAHFLSLFLLPQITYSAISDDLRDKQHFPALLRTVAGADHQIEAMVQLLLHFNWNWIIVLVSSDDYGRYNSQLLNDRLATGDICIAFQETLPMPQPDQVVTEWERQRLEAIVGKLQQSSARVVVLFSPDLILHNFFREVLRQNFTGAVWIASESWAIDPVLHNLTELRQTGTFLGVTTQSVPIPGFSEFRIRRTPVRLPEPNRTSLEATCNQECDTCQDTTASFNSILMLSGERVVYNVYSAVYAVAHALHSLLGCTQACSKEVVYPWQLLKEIWKVNFTLLGHNVFFGQQGDVLMPMEVIQWQWDLSQNPFQSIASYYPKLRQLKAIHNISWHTANNTIPVSMCSKDCHPGQRKKPVGIHSCCFECIDCLPGTFLNRTADEFDCQPCPSYEWSHRNDTSCFKRRLAFLEWHEPSTIFVVMLTILGFLSTLAIMVIFWRHLHTPVVRSAGGPMCFLMLVPLLLAYAMVPMYIGQPTFFSCLWRQTFFTLCFTICISCITVRSFQIVCIFKMARRLPRAYGYWVRCHGPYVFVASFMVLKVVIVAGNVLATTANPTARPDPDDPNIMVLSCNYRRALLFNTSLDLLLSVAGFSFAYMGKELPTNYNEAKFITLCMTFYFTSSVSLCTFMSVYDGVLVTILDLLITVLNLLGISFGYFGPKCYMVLFYPERNTQVYFSSMIQGYTMGKD.

Residues 1-19 (MGPRAKAVCSLFILLQVLA) form the signal peptide. At 20–565 (EPAENSDFYL…AFLEWHEPST (546 aa)) the chain is on the extracellular side. Asn84, Asn292, Asn312, Asn351, Asn427, Asn479, Asn486, Asn526, and Asn546 each carry an N-linked (GlcNAc...) asparagine glycan. The helical transmembrane segment at 566–586 (IFVVMLTILGFLSTLAIMVIF) threads the bilayer. At 587–601 (WRHLHTPVVRSAGGP) the chain is on the cytoplasmic side. Residues 602–622 (MCFLMLVPLLLAYAMVPMYIG) traverse the membrane as a helical segment. Over 623–634 (QPTFFSCLWRQT) the chain is Extracellular. A helical transmembrane segment spans residues 635–655 (FFTLCFTICISCITVRSFQIV). Over 656–680 (CIFKMARRLPRAYGYWVRCHGPYVF) the chain is Cytoplasmic. A helical membrane pass occupies residues 681-701 (VASFMVLKVVIVAGNVLATTA). Residues 702 to 724 (NPTARPDPDDPNIMVLSCNYRRA) lie on the Extracellular side of the membrane. The chain crosses the membrane as a helical span at residues 725 to 745 (LLFNTSLDLLLSVAGFSFAYM). The Cytoplasmic portion of the chain corresponds to 746 to 757 (GKELPTNYNEAK). The chain crosses the membrane as a helical span at residues 758–778 (FITLCMTFYFTSSVSLCTFMS). The Extracellular portion of the chain corresponds to 779–781 (VYD). Residues 782 to 802 (GVLVTILDLLITVLNLLGISF) traverse the membrane as a helical segment. The Cytoplasmic portion of the chain corresponds to 803–836 (GYFGPKCYMVLFYPERNTQVYFSSMIQGYTMGKD).

Belongs to the G-protein coupled receptor 3 family. TAS1R subfamily. In terms of assembly, forms heterodimers with TAS1R3.

It localises to the cell membrane. In terms of biological role, putative taste receptor. TAS1R2/TAS1R3 recognizes diverse natural and synthetic sweeteners. This is Taste receptor type 1 member 2 (TAS1R2) from Canis lupus familiaris (Dog).